The chain runs to 336 residues: 4-hydroxy-3-methylbut-2-enyl diphosphate reductase (336 aa).

Cysteine 37 serves as a coordination point for [4Fe-4S] cluster. (2E)-4-hydroxy-3-methylbut-2-enyl diphosphate is bound by residues histidine 66 and histidine 99. Histidine 66 and histidine 99 together coordinate dimethylallyl diphosphate. Isopentenyl diphosphate is bound by residues histidine 66 and histidine 99. Cysteine 121 provides a ligand contact to [4Fe-4S] cluster. Histidine 149 lines the (2E)-4-hydroxy-3-methylbut-2-enyl diphosphate pocket. Residue histidine 149 participates in dimethylallyl diphosphate binding. Histidine 149 contributes to the isopentenyl diphosphate binding site. Catalysis depends on glutamate 151, which acts as the Proton donor. Residue threonine 189 coordinates (2E)-4-hydroxy-3-methylbut-2-enyl diphosphate. Cysteine 219 contributes to the [4Fe-4S] cluster binding site. Residues serine 247, serine 248, asparagine 249, and serine 292 each contribute to the (2E)-4-hydroxy-3-methylbut-2-enyl diphosphate site. Dimethylallyl diphosphate contacts are provided by serine 247, serine 248, asparagine 249, and serine 292. Positions 247, 248, 249, and 292 each coordinate isopentenyl diphosphate.

This sequence belongs to the IspH family. Requires [4Fe-4S] cluster as cofactor.

The enzyme catalyses isopentenyl diphosphate + 2 oxidized [2Fe-2S]-[ferredoxin] + H2O = (2E)-4-hydroxy-3-methylbut-2-enyl diphosphate + 2 reduced [2Fe-2S]-[ferredoxin] + 2 H(+). The catalysed reaction is dimethylallyl diphosphate + 2 oxidized [2Fe-2S]-[ferredoxin] + H2O = (2E)-4-hydroxy-3-methylbut-2-enyl diphosphate + 2 reduced [2Fe-2S]-[ferredoxin] + 2 H(+). The protein operates within isoprenoid biosynthesis; dimethylallyl diphosphate biosynthesis; dimethylallyl diphosphate from (2E)-4-hydroxy-3-methylbutenyl diphosphate: step 1/1. Its pathway is isoprenoid biosynthesis; isopentenyl diphosphate biosynthesis via DXP pathway; isopentenyl diphosphate from 1-deoxy-D-xylulose 5-phosphate: step 6/6. Functionally, catalyzes the conversion of 1-hydroxy-2-methyl-2-(E)-butenyl 4-diphosphate (HMBPP) into a mixture of isopentenyl diphosphate (IPP) and dimethylallyl diphosphate (DMAPP). Acts in the terminal step of the DOXP/MEP pathway for isoprenoid precursor biosynthesis. The chain is 4-hydroxy-3-methylbut-2-enyl diphosphate reductase from Rhodococcus opacus (strain B4).